The sequence spans 299 residues: Oxaloacetate decarboxylase (299 aa).

Position 57 (serine 57) interacts with substrate. Aspartate 95 provides a ligand contact to Mg(2+). Substrate-binding residues include arginine 167 and histidine 243.

Belongs to the isocitrate lyase/PEP mutase superfamily. Oxaloacetate decarboxylase family. As to quaternary structure, homotetramer; dimer of dimers. Mg(2+) is required as a cofactor.

It catalyses the reaction oxaloacetate + H(+) = pyruvate + CO2. In terms of biological role, catalyzes the decarboxylation of oxaloacetate into pyruvate. Seems to play a role in maintaining cellular concentrations of bicarbonate and pyruvate. The protein is Oxaloacetate decarboxylase of Paraburkholderia xenovorans (strain LB400).